The sequence spans 346 residues: MAHHPRWTLSQVTELFEKPLLDLLFEAQQVHRQHFDPRQVQVSTLLSIKTGACPEDCKYCPQSSRYKTGLEAERLMEVEQVLESARKAKAAGSTRFCMGAAWKNPHERDMPYLEQMVQGVKAMGLEACMTLGTLSESQAQRLADAGLDYYNHNLDTSPEFYGNIITTRTYQERLDTLEKVRDAGIKVCSGGIVGLGETVKDRAGLLLQLANLPTPPESVPINMLVKVKGTPLADNDDVDAFDFIRTIAVARIMMPTSYVRLSAGREQMNEQTQAMCFMAGANSIFYGCKLLTTPNPEEDKDLQLFRKLGLNPQQTAVLAGDNEQQQRLEQALMTPDTDEYYNAAAL.

One can recognise a Radical SAM core domain in the interval 38–256; it reads RQVQVSTLLS…IAVARIMMPT (219 aa). [4Fe-4S] cluster is bound by residues cysteine 53, cysteine 57, and cysteine 60. Cysteine 97, cysteine 128, cysteine 188, and arginine 260 together coordinate [2Fe-2S] cluster.

Belongs to the radical SAM superfamily. Biotin synthase family. Homodimer. Requires [4Fe-4S] cluster as cofactor. [2Fe-2S] cluster serves as cofactor.

The enzyme catalyses (4R,5S)-dethiobiotin + (sulfur carrier)-SH + 2 reduced [2Fe-2S]-[ferredoxin] + 2 S-adenosyl-L-methionine = (sulfur carrier)-H + biotin + 2 5'-deoxyadenosine + 2 L-methionine + 2 oxidized [2Fe-2S]-[ferredoxin]. Its pathway is cofactor biosynthesis; biotin biosynthesis; biotin from 7,8-diaminononanoate: step 2/2. Catalyzes the conversion of dethiobiotin (DTB) to biotin by the insertion of a sulfur atom into dethiobiotin via a radical-based mechanism. This chain is Biotin synthase, found in Escherichia fergusonii (strain ATCC 35469 / DSM 13698 / CCUG 18766 / IAM 14443 / JCM 21226 / LMG 7866 / NBRC 102419 / NCTC 12128 / CDC 0568-73).